A 207-amino-acid chain; its full sequence is Probable nicotinate-nucleotide adenylyltransferase (207 aa).

It belongs to the NadD family.

It catalyses the reaction nicotinate beta-D-ribonucleotide + ATP + H(+) = deamido-NAD(+) + diphosphate. It participates in cofactor biosynthesis; NAD(+) biosynthesis; deamido-NAD(+) from nicotinate D-ribonucleotide: step 1/1. Its function is as follows. Catalyzes the reversible adenylation of nicotinate mononucleotide (NaMN) to nicotinic acid adenine dinucleotide (NaAD). In Desulfitobacterium hafniense (strain DSM 10664 / DCB-2), this protein is Probable nicotinate-nucleotide adenylyltransferase.